Consider the following 179-residue polypeptide: MSRIGKRPIPLPAKVSVDIQGSHLSVKGPKGSLERQLPEKVIVAQEGETITVTRQDESRTARERHGLVRTLVANMVDGVAQGFERRLEIQGVGYRAQAQGNKLTLNVGYSKPVEMTMPQGIEVKVENNTQVIVSGIDKELLGNTAAKIRAVRPPEPYKGKGIRYQGEYVRRKAGKTGKK.

Belongs to the universal ribosomal protein uL6 family. Part of the 50S ribosomal subunit.

This protein binds to the 23S rRNA, and is important in its secondary structure. It is located near the subunit interface in the base of the L7/L12 stalk, and near the tRNA binding site of the peptidyltransferase center. The sequence is that of Large ribosomal subunit protein uL6 from Synechocystis sp. (strain ATCC 27184 / PCC 6803 / Kazusa).